The sequence spans 384 residues: S-adenosylmethionine synthase (384 aa).

An ATP-binding site is contributed by His15. Asp17 lines the Mg(2+) pocket. A K(+)-binding site is contributed by Glu43. L-methionine-binding residues include Glu56 and Gln99. The flexible loop stretch occupies residues 99 to 109 (QSADINQGVDR). ATP-binding positions include 164–166 (DAK), 230–231 (RF), Asp239, 245–246 (RK), Ala262, and Lys266. Asp239 is a binding site for L-methionine. Lys270 contacts L-methionine.

The protein belongs to the AdoMet synthase family. Homotetramer; dimer of dimers. Mg(2+) serves as cofactor. The cofactor is K(+).

The protein localises to the cytoplasm. It carries out the reaction L-methionine + ATP + H2O = S-adenosyl-L-methionine + phosphate + diphosphate. Its pathway is amino-acid biosynthesis; S-adenosyl-L-methionine biosynthesis; S-adenosyl-L-methionine from L-methionine: step 1/1. In terms of biological role, catalyzes the formation of S-adenosylmethionine (AdoMet) from methionine and ATP. The overall synthetic reaction is composed of two sequential steps, AdoMet formation and the subsequent tripolyphosphate hydrolysis which occurs prior to release of AdoMet from the enzyme. This Haemophilus influenzae (strain PittEE) protein is S-adenosylmethionine synthase.